The chain runs to 252 residues: Hydroxyacylglutathione hydrolase (252 aa).

Zn(2+) contacts are provided by histidine 54, histidine 56, aspartate 58, histidine 59, histidine 111, aspartate 128, and histidine 166.

The protein belongs to the metallo-beta-lactamase superfamily. Glyoxalase II family. As to quaternary structure, monomer. The cofactor is Zn(2+).

It catalyses the reaction an S-(2-hydroxyacyl)glutathione + H2O = a 2-hydroxy carboxylate + glutathione + H(+). It participates in secondary metabolite metabolism; methylglyoxal degradation; (R)-lactate from methylglyoxal: step 2/2. Functionally, thiolesterase that catalyzes the hydrolysis of S-D-lactoyl-glutathione to form glutathione and D-lactic acid. The polypeptide is Hydroxyacylglutathione hydrolase (Aliivibrio salmonicida (strain LFI1238) (Vibrio salmonicida (strain LFI1238))).